A 204-amino-acid polypeptide reads, in one-letter code: MIKFVIDTSAVTDPRLRQLFGVNELWEVVEKYLELMALAKLKLGFSFYTTPSVMKEIKGFLERSMCPSEIISKLGVWILVKDVSQTEAKIPARVFLEYVAEVKRRLDKGLRVAEESTRRAMEGGEIGEHIRNLREKYREATRKGLLDSVADLEAAILALELGAVLVTNDEGLCKLASKLGVSCIDPLTFVKTIEEYLNLIKRHG.

This sequence belongs to the HARP family.

The enzyme catalyses Endonucleolytic cleavage of RNA, removing 5'-extranucleotides from tRNA precursor.. Functionally, RNA-free RNase P that catalyzes the removal of the 5'-leader sequence from pre-tRNA to produce the mature 5'-terminus. This is RNA-free ribonuclease P from Ignicoccus hospitalis (strain KIN4/I / DSM 18386 / JCM 14125).